The primary structure comprises 157 residues: Cyclic pyranopterin monophosphate synthase (157 aa).

Substrate is bound by residues 74 to 76 (MCH) and 112 to 113 (ME). The active site involves D127.

This sequence belongs to the MoaC family. Homohexamer; trimer of dimers.

The catalysed reaction is (8S)-3',8-cyclo-7,8-dihydroguanosine 5'-triphosphate = cyclic pyranopterin phosphate + diphosphate. Its pathway is cofactor biosynthesis; molybdopterin biosynthesis. In terms of biological role, catalyzes the conversion of (8S)-3',8-cyclo-7,8-dihydroguanosine 5'-triphosphate to cyclic pyranopterin monophosphate (cPMP). The chain is Cyclic pyranopterin monophosphate synthase from Campylobacter jejuni subsp. jejuni serotype O:23/36 (strain 81-176).